The following is a 185-amino-acid chain: Ribosome-recycling factor (185 aa).

Belongs to the RRF family.

The protein resides in the cytoplasm. In terms of biological role, responsible for the release of ribosomes from messenger RNA at the termination of protein biosynthesis. May increase the efficiency of translation by recycling ribosomes from one round of translation to another. The sequence is that of Ribosome-recycling factor from Francisella tularensis subsp. holarctica (strain FTNF002-00 / FTA).